A 612-amino-acid polypeptide reads, in one-letter code: Putative pentatricopeptide repeat-containing protein At5g40405 (612 aa).

10 PPR repeats span residues Thr-70–Leu-104, Asp-107–Asn-141, Asp-142–Pro-172, Asp-173–Arg-203, Asp-204–Val-238, Asn-239–Ile-273, Thr-274–Lys-304, Asn-305–Pro-339, Asn-340–Pro-375, and Gln-376–Ala-410. The segment at Val-411 to Asn-486 is type E motif. The tract at residues Gly-487 to Arg-517 is type E(+) motif. Positions Leu-518 to Trp-612 are type DYW motif.

It belongs to the PPR family. PCMP-H subfamily.

The chain is Putative pentatricopeptide repeat-containing protein At5g40405 (PCMP-H14) from Arabidopsis thaliana (Mouse-ear cress).